Here is a 419-residue protein sequence, read N- to C-terminus: Serine--tRNA ligase (419 aa).

Position 226–228 (226–228 (TSE)) interacts with L-serine. Residues 257 to 259 (RRE) and Val273 each bind ATP. Glu280 is a binding site for L-serine. 344 to 347 (ELTS) is an ATP binding site. Thr379 contributes to the L-serine binding site.

It belongs to the class-II aminoacyl-tRNA synthetase family. Type-1 seryl-tRNA synthetase subfamily. Homodimer. The tRNA molecule binds across the dimer.

Its subcellular location is the cytoplasm. It carries out the reaction tRNA(Ser) + L-serine + ATP = L-seryl-tRNA(Ser) + AMP + diphosphate + H(+). The catalysed reaction is tRNA(Sec) + L-serine + ATP = L-seryl-tRNA(Sec) + AMP + diphosphate + H(+). It functions in the pathway aminoacyl-tRNA biosynthesis; selenocysteinyl-tRNA(Sec) biosynthesis; L-seryl-tRNA(Sec) from L-serine and tRNA(Sec): step 1/1. Catalyzes the attachment of serine to tRNA(Ser). Is also able to aminoacylate tRNA(Sec) with serine, to form the misacylated tRNA L-seryl-tRNA(Sec), which will be further converted into selenocysteinyl-tRNA(Sec). This chain is Serine--tRNA ligase, found in Mycobacterium marinum (strain ATCC BAA-535 / M).